A 296-amino-acid chain; its full sequence is Mitochondrial arginine transporter BAC2 (296 aa).

Solcar repeat units lie at residues Gly13–Ser93, Pro104–Arg187, and Glu198–Cys282. 6 helical membrane passes run Phe16–Leu36, Ala70–Phe90, Ala110–Ile130, Gly162–Tyr181, Leu204–Val224, and Thr260–Leu280.

This sequence belongs to the mitochondrial carrier (TC 2.A.29) family. In terms of tissue distribution, high expression in flowers, stamens, petals and pollen. Expressed in roots, leaves and stems.

It localises to the mitochondrion inner membrane. Inhibited by mercuric chloride. Its function is as follows. Mitochondrial arginine transporter that catalyzes the counter-exchange of arginine with lysine, ornithine, arginine, histidine and citrulline. Substrate preference in reconstituted proteoliposomes is arginine &gt; homoarginine &gt; citrulline &gt; histidine &gt; lysine &gt; ornithine. May be involved in the delivery of arginine, released from seed reserves, to mitochondrial arginase and the export of ornithine. May contribute to proline accumulation in response to hyperosmotic stress. The chain is Mitochondrial arginine transporter BAC2 (BAC2) from Arabidopsis thaliana (Mouse-ear cress).